The chain runs to 341 residues: Methionine import ATP-binding protein MetN 1 (341 aa).

The 240-residue stretch at 2–241 folds into the ABC transporter domain; sequence IEFRQVSKSF…PKTTIAQNFV (240 aa). 38–45 lines the ATP pocket; sequence GYSGAGKS.

Belongs to the ABC transporter superfamily. Methionine importer (TC 3.A.1.24) family. The complex is composed of two ATP-binding proteins (MetN), two transmembrane proteins (MetI) and a solute-binding protein (MetQ).

The protein resides in the cell membrane. The catalysed reaction is L-methionine(out) + ATP + H2O = L-methionine(in) + ADP + phosphate + H(+). It catalyses the reaction D-methionine(out) + ATP + H2O = D-methionine(in) + ADP + phosphate + H(+). Part of the ABC transporter complex MetNIQ involved in methionine import. Responsible for energy coupling to the transport system. In Staphylococcus aureus (strain Mu50 / ATCC 700699), this protein is Methionine import ATP-binding protein MetN 1.